The sequence spans 464 residues: F-box/WD repeat-containing protein 12 (464 aa).

An F-box domain is found at 1-45; it reads MEIRLPDLALKRIFSFLDLFGLLQVSQVNKHWNRIADSDYLWRSL. WD repeat units lie at residues 89–132, 136–174, 178–217, 222–263, 270–315, 320–367, 370–407, and 416–461; these read YKVT…CAWD, GTMI…KVWN, RDAL…YTFT, RDVS…FLTE, EGSV…ITFD, KTGG…LLFS, GFLL…YMWE, and RSCC…VMYS.

In terms of assembly, interacts with SKP1. Interacts with CUL1. Interacts with IL22RA1. In terms of tissue distribution, ubiquitously expressed.

Its pathway is protein modification; protein ubiquitination. Substrate-recognition component of the SCF (SKP1-CUL1-F-box protein)-type E3 ubiquitin ligase complex. Promotes degradation of interleukin-22 receptor subunit IL22RA1 in resting and IL22-stimulated conditions by facilitating its ubiquitination. Functions as a cell growth suppressor. This Homo sapiens (Human) protein is F-box/WD repeat-containing protein 12 (FBXW12).